Here is a 333-residue protein sequence, read N- to C-terminus: MLERLWYAKSGWRWLLAPFALLFAIISGTRRYAYRHGWRKGYRSSLPVIVVGNISVGGNGKTPVVVWLVEQLQARGYRPGVVSRGYGGKAPHYPYRLDAASTTAQAGDEPVLIARRCGCPVVVAPKRADAVRLLEQSGEVDIIITDDGLQHYALARDIELVVVDGARRFGNACLLPMGPLREPVTRLKRVDAIICNGGEPGRGEYPMRLVADVPRRVRDEAPLAAPLSGPVDALAGIGHPPRFFATLEGLGYQLDQRVAYGDHHPFDRDELVGRFAGKPLLMTEKDAVKCRSFALDNWWYLPVSAELPASLLDTLLHKLGAGGKGQGATQAQG.

55–62 (SVGGNGKT) is a binding site for ATP.

The protein belongs to the LpxK family.

It catalyses the reaction a lipid A disaccharide + ATP = a lipid IVA + ADP + H(+). It functions in the pathway glycolipid biosynthesis; lipid IV(A) biosynthesis; lipid IV(A) from (3R)-3-hydroxytetradecanoyl-[acyl-carrier-protein] and UDP-N-acetyl-alpha-D-glucosamine: step 6/6. Functionally, transfers the gamma-phosphate of ATP to the 4'-position of a tetraacyldisaccharide 1-phosphate intermediate (termed DS-1-P) to form tetraacyldisaccharide 1,4'-bis-phosphate (lipid IVA). This chain is Tetraacyldisaccharide 4'-kinase, found in Aeromonas hydrophila subsp. hydrophila (strain ATCC 7966 / DSM 30187 / BCRC 13018 / CCUG 14551 / JCM 1027 / KCTC 2358 / NCIMB 9240 / NCTC 8049).